The following is a 141-amino-acid chain: ATP synthase epsilon chain (141 aa).

It belongs to the ATPase epsilon chain family. In terms of assembly, F-type ATPases have 2 components, CF(1) - the catalytic core - and CF(0) - the membrane proton channel. CF(1) has five subunits: alpha(3), beta(3), gamma(1), delta(1), epsilon(1). CF(0) has three main subunits: a, b and c.

Its subcellular location is the cell inner membrane. Produces ATP from ADP in the presence of a proton gradient across the membrane. This chain is ATP synthase epsilon chain, found in Pseudomonas fluorescens (strain Pf0-1).